The chain runs to 283 residues: Probable 3-deoxy-manno-octulosonic acid transferase (283 aa).

It is found in the cytoplasm. It carries out the reaction an alpha-Kdo-(2-&gt;4)-alpha-Kdo-(2-&gt;6)-lipid IVA + CMP-3-deoxy-beta-D-manno-octulosonate = an alpha-Kdo-(2-&gt;4)-alpha-Kdo-(2-&gt;4)-alpha-Kdo-(2-&gt;6)-lipid IVA + CMP + H(+). The catalysed reaction is alpha-Kdo-(2-&gt;4)-alpha-Kdo-(2-&gt;6)-lipid IVA (E. coli) + CMP-3-deoxy-beta-D-manno-octulosonate = alpha-Kdo-(2-&gt;4)-alpha-Kdo-(2-&gt;4)-alpha-Kdo-(2-&gt;6)-lipid IVA + CMP + H(+). Its pathway is bacterial outer membrane biogenesis; LPS core biosynthesis. It participates in bacterial outer membrane biogenesis; LOS core biosynthesis. Its function is as follows. Involved in the biosynthesis of the core oligosaccharide region of lipopolysaccharide (LPS). Required for the addition of 3-deoxy-D-manno-oct-2-ulosonic acid III (KdoIII) to the KdoII residue of the inner lipopolysaccharide core. May also play a role in a lipooligosaccharide (LOS) biosynthesis pathway. The chain is Probable 3-deoxy-manno-octulosonic acid transferase from Escherichia coli (strain K12).